We begin with the raw amino-acid sequence, 1620 residues long: Probable serine/threonine-protein kinase gdt4 (1620 aa).

Residues 1–19 (MKLEQRIFFLICLVINSFS) form the signal peptide. Topologically, residues 20–891 (NCSLLVAPDG…EVIGINEQLN (872 aa)) are extracellular. A helical membrane pass occupies residues 892 to 912 (ILAIVLPITISLFAAASILAG). The Cytoplasmic segment spans residues 913-1620 (YLVIKKYKKP…AKRNKKNQNQ (708 aa)). Positions 1349–1604 (IVLEKYLSEG…TLIDLLEKLL (256 aa)) constitute a Protein kinase domain. ATP contacts are provided by residues 1355-1363 (LSEGSFGVV) and lysine 1376. Aspartate 1466 acts as the Proton acceptor in catalysis.

It in the N-terminal section; belongs to the GDT family. The protein in the C-terminal section; belongs to the protein kinase superfamily. TKL Ser/Thr protein kinase family.

The protein resides in the membrane. The catalysed reaction is L-seryl-[protein] + ATP = O-phospho-L-seryl-[protein] + ADP + H(+). It catalyses the reaction L-threonyl-[protein] + ATP = O-phospho-L-threonyl-[protein] + ADP + H(+). The sequence is that of Probable serine/threonine-protein kinase gdt4 (gdt4) from Dictyostelium discoideum (Social amoeba).